A 375-amino-acid chain; its full sequence is E3 ubiquitin-protein ligase RHF2A (375 aa).

Residues 33–74 (CSICLESFCESDPSTLTSCKHEYHLQCILEWCQRSSQCPMCW) form an RING-type; atypical zinc finger. The span at 146–159 (RARHGVRREGHRSR) shows a compositional bias: basic residues. 3 disordered regions span residues 146–165 (RARH…SQGH), 172–262 (SSQP…SESL), and 318–375 (ERLE…SGSS). Positions 178-188 (SSPPPHPPMPS) are enriched in pro residues. Polar residues-rich tracts occupy residues 211–245 (SHQS…SSPS) and 327–336 (RPSTASVSDV). Basic and acidic residues predominate over residues 337-365 (SENHTPETNNEHNRAAAGDEHSVNERGVK).

It carries out the reaction S-ubiquitinyl-[E2 ubiquitin-conjugating enzyme]-L-cysteine + [acceptor protein]-L-lysine = [E2 ubiquitin-conjugating enzyme]-L-cysteine + N(6)-ubiquitinyl-[acceptor protein]-L-lysine.. It functions in the pathway protein modification; protein ubiquitination. E3 ubiquitin-protein ligase involved in the positive regulation of the gametogenesis progression. Required for the degradation of KRP6, a cyclin-dependent kinase inhibitor which accumulates during meiosis and blocks the progression of subsequent mitoses during gametophytes development. Functions in association with RHF1A. This Arabidopsis thaliana (Mouse-ear cress) protein is E3 ubiquitin-protein ligase RHF2A.